The primary structure comprises 766 residues: Deoxynucleotidyltransferase terminal-interacting protein 2 (766 aa).

A disordered region spans residues 1 to 99 (MVVTRSARPQ…DCSSVPEVQD (99 aa)). Polar residues-rich tracts occupy residues 13 to 28 (NEATSVESLRQKNSAV) and 42 to 56 (SPDNPNTTESQTTPE). The residue at position 127 (threonine 127) is a Phosphothreonine. A phosphoserine mark is found at serine 139, serine 143, and serine 146. The disordered stretch occupies residues 155–175 (TEITTRRSKAKSQREPKQESH). The span at 166-175 (SQREPKQESH) shows a compositional bias: basic and acidic residues. Residues serine 180 and serine 190 each carry the phosphoserine modification. Lysine 217 is covalently cross-linked (Glycyl lysine isopeptide (Lys-Gly) (interchain with G-Cter in SUMO2)). The residue at position 229 (threonine 229) is a Phosphothreonine. Serine 236, serine 248, and serine 250 each carry phosphoserine. A Glycyl lysine isopeptide (Lys-Gly) (interchain with G-Cter in SUMO2) cross-link involves residue lysine 254. Serine 258 is modified (phosphoserine). Lysine 327 participates in a covalent cross-link: Glycyl lysine isopeptide (Lys-Gly) (interchain with G-Cter in SUMO2). The residue at position 334 (serine 334) is a Phosphoserine. Disordered regions lie at residues 345-367 (VSQRHSTPESDKTTSESSTLNHE), 390-450 (KNAI…KDDS), and 520-557 (KAGEVATEEEEEEEEEESEEELSDHDRNKDNEFSDEDN). Residue lysine 394 forms a Glycyl lysine isopeptide (Lys-Gly) (interchain with G-Cter in SUMO2) linkage. Basic and acidic residues predominate over residues 421–434 (DMSKEKEVDSESDT). Residues 435–444 (KPSNLEFNTT) show a composition bias toward polar residues. Positions 515–552 (LDEEDKAGEVATEEEEEEEEEESEEELSDHDRNKDNEF) form a coiled coil. The segment covering 520 to 542 (KAGEVATEEEEEEEEEESEEELS) has biased composition (acidic residues). The tract at residues 558–615 (LLSNTKSKLLKLMSSSIDTGLNIKELGGLYINFNADKVQLNKRTLTQMKEKRKDELLQ) is tdBR region; mediates interaction with DNTT. Glycyl lysine isopeptide (Lys-Gly) (interchain with G-Cter in SUMO2) cross-links involve residues lysine 568, lysine 594, and lysine 616. Threonine 620 bears the Phosphothreonine mark. Residues lysine 636, lysine 659, lysine 668, lysine 696, and lysine 741 each participate in a glycyl lysine isopeptide (Lys-Gly) (interchain with G-Cter in SUMO2) cross-link.

In terms of assembly, forms a ternary complex with DNTT and core histone; interaction with PCNA releases DNTT and H2A/H2B histones from this ternary complex. Interacts with ESR1, ESR2, PPARG and RXRA. Part of the small subunit (SSU) processome, composed of more than 70 proteins and the RNA chaperone small nucleolar RNA (snoRNA) U3.

It localises to the nucleus. The protein resides in the nucleolus. Functionally, regulates the transcriptional activity of DNTT and ESR1. May function as a chromatin remodeling protein. Part of the small subunit (SSU) processome, first precursor of the small eukaryotic ribosomal subunit. During the assembly of the SSU processome in the nucleolus, many ribosome biogenesis factors, an RNA chaperone and ribosomal proteins associate with the nascent pre-rRNA and work in concert to generate RNA folding, modifications, rearrangements and cleavage as well as targeted degradation of pre-ribosomal RNA by the RNA exosome. This Bos taurus (Bovine) protein is Deoxynucleotidyltransferase terminal-interacting protein 2 (DNTTIP2).